The sequence spans 358 residues: DNA replication and repair protein RecF (358 aa).

An ATP-binding site is contributed by 33 to 40 (GENGAGKT).

It belongs to the RecF family.

It localises to the cytoplasm. The RecF protein is involved in DNA metabolism; it is required for DNA replication and normal SOS inducibility. RecF binds preferentially to single-stranded, linear DNA. It also seems to bind ATP. The polypeptide is DNA replication and repair protein RecF (Deinococcus geothermalis (strain DSM 11300 / CIP 105573 / AG-3a)).